The primary structure comprises 475 residues: Protein transport protein Sec61 subunit alpha (475 aa).

10 helical membrane passes run 33–53, 76–96, 118–138, 145–165, 173–193, 241–261, 289–309, 354–374, 420–440, and 441–461; these read LWTA…LFGI, LMEL…LLAG, LFGM…GMYG, AGIC…VLLL, YGLG…TIVW, NLMN…FQGF, IPII…QMLA, FLDP…CAFF, AAFG…IGAI, and GSGT…EIFV.

The protein belongs to the SecY/SEC61-alpha family. As to quaternary structure, the SEC61 channel-forming translocon complex consists of channel-forming core components SEC61A1, SEC61B and SEC61G and different auxiliary components such as SEC62 and SEC63. The SEC61 channel associates with the multi-pass translocon (MPT) complex. In terms of tissue distribution, expressed predominantly in epidermal cells of the embryo.

The protein localises to the endoplasmic reticulum membrane. Its function is as follows. Component of SEC61 channel-forming translocon complex that mediates transport of signal peptide-containing precursor polypeptides across the endoplasmic reticulum (ER). Forms a ribosome receptor and a gated pore in the ER membrane, both functions required for cotranslational translocation of nascent polypeptides. May cooperate with auxiliary protein SEC62, SEC63 and HSPA5/BiP to enable post-translational transport of small presecretory proteins. The SEC61 channel is also involved in ER membrane insertion of transmembrane proteins: it mediates membrane insertion of the first few transmembrane segments of proteins, while insertion of subsequent transmembrane regions of multi-pass membrane proteins is mediated by the multi-pass translocon (MPT) complex. This Halocynthia roretzi (Sea squirt) protein is Protein transport protein Sec61 subunit alpha.